Here is a 614-residue protein sequence, read N- to C-terminus: Zinc finger and SCAN domain-containing protein 2 (614 aa).

Disordered stretches follow at residues 1 to 26 and 43 to 76; these read MMAADIPRVTTPLSSLVQVPQEEDRQ and EAVLQEDGPESEPFPQSAGKGGPQEEVTRGPQGA. One can recognise an SCAN box domain in the interval 59–132; sequence SAGKGGPQEE…ALVEDLTQTL (74 aa). C2H2-type zinc fingers lie at residues 222 to 244, 250 to 272, 278 to 300, 306 to 328, 334 to 356, 362 to 384, 390 to 412, 418 to 440, 446 to 468, 474 to 496, 502 to 524, 530 to 552, 558 to 580, and 586 to 608; these read YECPQCGKTFSRKSHLITHERTH, YKCDECGKSFSDGSNFSRHQTTH, YKCRDCGKSFSRSANLITHQRIH, FQCAECGKSFSRSPNLIAHQRTH, YSCPECGKSFGNRSSLNTHQGIH, YECKECGESFSYNSNLIRHQRIH, YKCTDCGQRFSQSSALITHRRTH, YQCSECGKSFSRSSNLATHRRTH, YKCGVCGKSFSQSSSLIAHQGMH, YECLTCGESFSWSSNLLKHQRIH, YKCSECGKCFSQRSQLVVHQRTH, YKCLMCGKSFSRGSILVMHQRAH, YRCPECGKGFSWNSVLIIHQRIH, and YKCPECGKGFSNSSNFITHQRTH.

The protein belongs to the krueppel C2H2-type zinc-finger protein family.

It is found in the nucleus. May be involved in transcriptional regulation during the post-meiotic stages of spermatogenesis. This is Zinc finger and SCAN domain-containing protein 2 (ZSCAN2) from Homo sapiens (Human).